Here is a 159-residue protein sequence, read N- to C-terminus: Phosphopantetheine adenylyltransferase (159 aa).

Substrate is bound at residue T10. ATP is bound by residues 10–11 (TF) and H18. Residues K42, M74, and R88 each coordinate substrate. ATP is bound by residues 89 to 91 (GLR), E99, and 124 to 130 (WSFISSS).

This sequence belongs to the bacterial CoaD family. Homohexamer. Mg(2+) serves as cofactor.

It is found in the cytoplasm. It carries out the reaction (R)-4'-phosphopantetheine + ATP + H(+) = 3'-dephospho-CoA + diphosphate. The protein operates within cofactor biosynthesis; coenzyme A biosynthesis; CoA from (R)-pantothenate: step 4/5. Its function is as follows. Reversibly transfers an adenylyl group from ATP to 4'-phosphopantetheine, yielding dephospho-CoA (dPCoA) and pyrophosphate. The protein is Phosphopantetheine adenylyltransferase of Shigella sonnei (strain Ss046).